A 570-amino-acid polypeptide reads, in one-letter code: Urease subunit alpha (570 aa).

Residues 132–570 form the Urease domain; that stretch reads GGFDSHIHYI…LPLAQRYFLF (439 aa). Residues H137, H139, and K220 each coordinate Ni(2+). Position 220 is an N6-carboxylysine (K220). H222 serves as a coordination point for substrate. Ni(2+) contacts are provided by H249 and H275. H323 acts as the Proton donor in catalysis. D363 contacts Ni(2+).

This sequence belongs to the metallo-dependent hydrolases superfamily. Urease alpha subunit family. Heterotrimer of UreA (gamma), UreB (beta) and UreC (alpha) subunits. Three heterotrimers associate to form the active enzyme. It depends on Ni cation as a cofactor. Carboxylation allows a single lysine to coordinate two nickel ions.

Its subcellular location is the cytoplasm. The enzyme catalyses urea + 2 H2O + H(+) = hydrogencarbonate + 2 NH4(+). It functions in the pathway nitrogen metabolism; urea degradation; CO(2) and NH(3) from urea (urease route): step 1/1. The polypeptide is Urease subunit alpha (Ruegeria sp. (strain TM1040) (Silicibacter sp.)).